We begin with the raw amino-acid sequence, 315 residues long: Ribosomal RNA small subunit methyltransferase H (315 aa).

Residues 37 to 39 (GGH), aspartate 57, phenylalanine 83, aspartate 105, and glutamine 112 contribute to the S-adenosyl-L-methionine site.

This sequence belongs to the methyltransferase superfamily. RsmH family.

It localises to the cytoplasm. The enzyme catalyses cytidine(1402) in 16S rRNA + S-adenosyl-L-methionine = N(4)-methylcytidine(1402) in 16S rRNA + S-adenosyl-L-homocysteine + H(+). Its function is as follows. Specifically methylates the N4 position of cytidine in position 1402 (C1402) of 16S rRNA. The sequence is that of Ribosomal RNA small subunit methyltransferase H from Pseudomonas fluorescens (strain SBW25).